The sequence spans 1026 residues: Contactin-4 (1026 aa).

Positions 1-18 (MRLPWELLVLQSFMLCLA) are cleaved as a signal peptide. 6 Ig-like C2-type domains span residues 32–117 (PSHV…AKLQ), 122–206 (ENFK…HQVL), 225–311 (PKIE…GQVT), 316–400 (PNWV…AELS), 406–493 (PDFS…GNVV), and 497–586 (PTKV…DKLS). Cystine bridges form between cysteine 50-cysteine 100, cysteine 144-cysteine 194, cysteine 247-cysteine 295, cysteine 337-cysteine 384, cysteine 429-cysteine 477, and cysteine 519-cysteine 576. 3 N-linked (GlcNAc...) asparagine glycosylation sites follow: asparagine 65, asparagine 90, and asparagine 191. Residues asparagine 370, asparagine 375, and asparagine 466 are each glycosylated (N-linked (GlcNAc...) asparagine). 4 consecutive Fibronectin type-III domains span residues 599-697 (PPEA…TEEA), 702-799 (TPAN…SAEE), 804-899 (PPAS…TRKP), and 900-995 (PPSQ…ISNS). The interval 685 to 710 (PSRPSEKRRTEEALPEVTPANVSGGG) is disordered. The segment covering 687 to 696 (RPSEKRRTEE) has biased composition (basic and acidic residues). N-linked (GlcNAc...) asparagine glycans are attached at residues asparagine 705, asparagine 764, asparagine 858, asparagine 893, asparagine 911, asparagine 929, and asparagine 954. The GPI-anchor amidated serine moiety is linked to residue serine 1000. Residues 1001-1026 (GASTSNACTLSAISTIMISLTARSSL) constitute a propeptide, removed in mature form.

Belongs to the immunoglobulin superfamily. Contactin family. Interacts with PTPRG. In terms of tissue distribution, specifically expressed in the nervous system. Not expressed in heart, spleen, lung, liver, kidney or skeletal muscle. In the hippocampus, it is highly expressed in CA1 pyramidal cells and weakly expressed in other regions of the hippocampus.

It localises to the cell membrane. Its subcellular location is the secreted. Its function is as follows. Contactins mediate cell surface interactions during nervous system development. Has some neurite outgrowth-promoting activity. May be involved in synaptogenesis. This Rattus norvegicus (Rat) protein is Contactin-4 (Cntn4).